Consider the following 89-residue polypeptide: Alpha-ketoglutarate dehydrogenase subunit 4, mitochondrial (89 aa).

The protein belongs to the alpha-ketoglutarate dehydrogenase component 4 family. As to quaternary structure, component of the 2-oxoglutarate dehydrogenase complex (OGDC), also called alpha-ketoglutarate dehydrogenase (KGDH) complex. The copmplex is composed of the catalytic subunits OGDH (2-oxoglutarate dehydrogenase kgd1; also called E1 subunit), DLST (dihydrolipoamide succinyltransferase kgd2; also called E2 subunit) and DLD (dihydrolipoamide dehydrogenase dld1; also called E3 subunit), and the assembly factor KGD4. Within OGDC, interacts (via N-terminus) with E3 subunit and (via C-terminus) with the complex core formed by E1 and E2 subunits.

It localises to the mitochondrion. In terms of biological role, molecular adapter that is necessary to a form a stable 2-oxoglutarate dehydrogenase enzyme complex (OGDC). Required for incorporation of the E3 subunit (dld1) into the E1-E2 core (kgd1-kgd2) of mitochondrial OGDC, and acting as a stability factor for the fully assembled complex. The chain is Alpha-ketoglutarate dehydrogenase subunit 4, mitochondrial (kgd4) from Schizosaccharomyces pombe (strain 972 / ATCC 24843) (Fission yeast).